A 35-amino-acid chain; its full sequence is Photosystem II reaction center protein T (35 aa).

The chain crosses the membrane as a helical span at residues 3 to 23 (ALVYTFLLVSTLGIIFFAIFF).

It belongs to the PsbT family. As to quaternary structure, PSII is composed of 1 copy each of membrane proteins PsbA, PsbB, PsbC, PsbD, PsbE, PsbF, PsbH, PsbI, PsbJ, PsbK, PsbL, PsbM, PsbT, PsbY, PsbZ, Psb30/Ycf12, at least 3 peripheral proteins of the oxygen-evolving complex and a large number of cofactors. It forms dimeric complexes.

It localises to the plastid. The protein localises to the chloroplast thylakoid membrane. Found at the monomer-monomer interface of the photosystem II (PS II) dimer, plays a role in assembly and dimerization of PSII. PSII is a light-driven water plastoquinone oxidoreductase, using light energy to abstract electrons from H(2)O, generating a proton gradient subsequently used for ATP formation. The chain is Photosystem II reaction center protein T from Citrus sinensis (Sweet orange).